The chain runs to 292 residues: ATP synthase subunit a (292 aa).

7 helical membrane-spanning segments follow: residues 39–59 (QILG…FYKL), 73–93 (FLLL…DLLG), 102–122 (YFLM…LGGI), 128–148 (SLTF…VMGI), 172–192 (TFIP…SISL), 196–216 (GNIL…IFIF), and 231–251 (VFAG…AGVL).

It belongs to the ATPase A chain family. F-type ATPases have 2 components, CF(1) - the catalytic core - and CF(0) - the membrane proton channel. CF(1) has five subunits: alpha(3), beta(3), gamma(1), delta(1), epsilon(1). CF(0) has three main subunits: a(1), b(2) and c(9-12). The alpha and beta chains form an alternating ring which encloses part of the gamma chain. CF(1) is attached to CF(0) by a central stalk formed by the gamma and epsilon chains, while a peripheral stalk is formed by the delta and b chains.

Its subcellular location is the cell membrane. Its function is as follows. Key component of the proton channel; it plays a direct role in the translocation of protons across the membrane. This is ATP synthase subunit a from Mycoplasma genitalium (strain ATCC 33530 / DSM 19775 / NCTC 10195 / G37) (Mycoplasmoides genitalium).